The chain runs to 103 residues: N(4)-acetylcytidine amidohydrolase (103 aa).

The ASCH domain maps to 6–94 (ITFFQRFQND…IAEIYPNQTQ (89 aa)). K21 serves as the catalytic Proton acceptor. The active-site Nucleophile is the T24. E74 acts as the Proton donor in catalysis.

It belongs to the N(4)-acetylcytidine amidohydrolase family.

It catalyses the reaction N(4)-acetylcytidine + H2O = cytidine + acetate + H(+). It carries out the reaction N(4)-acetyl-2'-deoxycytidine + H2O = 2'-deoxycytidine + acetate + H(+). The catalysed reaction is N(4)-acetylcytosine + H2O = cytosine + acetate + H(+). Its function is as follows. Catalyzes the hydrolysis of N(4)-acetylcytidine (ac4C). In Salmonella schwarzengrund (strain CVM19633), this protein is N(4)-acetylcytidine amidohydrolase (yqfB).